A 562-amino-acid chain; its full sequence is MDTKTLIANDIAKVVPELDQETIYNLLETPKNSDMGDVAFPAFSLAKVLRKAPQMIAGELAEKIDAAQYEKVMAVGPYINFFLDKSSISKEVLEAVIKEKANYGQQHIGDGQNVTLDMSSPNIAKPFSVGHLRSTVIADAIGHIYSKLGYNSIRINHLGDWGKQFGMLIVAYKLWGDRATVEANPIDELLKLYVRINAEAEENPELDEQARQWFKKLEDGDKEAWDLWQWFRDESLVEFNRIYDKLDVSFDHFHGEAFYNDKMDEGIQILEDKNLLKESKGAQIVDLEKYNLPPALIKKSDGATLYITRDMATAMYRQRTFNFVKNIYVVGQEQSHHFKQLKAVLKEMGFDWSDDMIHVSFGLVTKNKKKLSTRKGNIIRLEPTLDEAVSRALTQIEAKNPDLENKEDVAHAVGVGAVKFYDLKTDRDNGYDFDLEAMVSFEGETGPYVQYTYARIQSILRKADFTPNEETPYSLNDAESWEIIKLLQGFAANIERAAEKYDPSIIAKFAIQLAQSFNRYYAHTRILDESEERDSRLALCYATAVVLKESLRLLGVQAPEKM.

The 'HIGH' region motif lies at 121–131; sequence PNIAKPFSVGH.

Belongs to the class-I aminoacyl-tRNA synthetase family. As to quaternary structure, monomer.

The protein localises to the cytoplasm. It catalyses the reaction tRNA(Arg) + L-arginine + ATP = L-arginyl-tRNA(Arg) + AMP + diphosphate. This Streptococcus uberis (strain ATCC BAA-854 / 0140J) protein is Arginine--tRNA ligase.